We begin with the raw amino-acid sequence, 145 residues long: Class I hydrophobin rodE (145 aa).

Intrachain disulfides connect C43-C126, C59-C120, C60-C95, and C127-C140.

This sequence belongs to the fungal hydrophobin family. As to quaternary structure, self-assembles to form functional amyloid fibrils called rodlets. Self-assembly into fibrillar rodlets occurs spontaneously at hydrophobic:hydrophilic interfaces and the rodlets further associate laterally to form amphipathic monolayers.

Its function is as follows. Aerial growth, conidiation, and dispersal of filamentous fungi in the environment rely upon a capability of their secreting small amphipathic proteins called hydrophobins (HPBs) with low sequence identity. Class I can self-assemble into an outermost layer of rodlet bundles on aerial cell surfaces, conferring cellular hydrophobicity that supports fungal growth, development and dispersal; whereas Class II form highly ordered films at water-air interfaces through intermolecular interactions but contribute nothing to the rodlet structure. RodE is a class I hydrophobin that, unlike rodA, is not required for rodlet formation. In Aspergillus fumigatus (strain ATCC MYA-4609 / CBS 101355 / FGSC A1100 / Af293) (Neosartorya fumigata), this protein is Class I hydrophobin rodE.